The following is a 175-amino-acid chain: Large ribosomal subunit protein uL22 (175 aa).

The disordered stretch occupies residues 113-175; that stretch reads VESRPVKDQR…EASETKGGSD (63 aa). Positions 136–154 are enriched in low complexity; that stretch reads KTAGRAPAKKAGASSGATK. A compositionally biased stretch (basic and acidic residues) spans 166 to 175; it reads EASETKGGSD.

The protein belongs to the universal ribosomal protein uL22 family. In terms of assembly, part of the 50S ribosomal subunit.

This protein binds specifically to 23S rRNA; its binding is stimulated by other ribosomal proteins, e.g. L4, L17, and L20. It is important during the early stages of 50S assembly. It makes multiple contacts with different domains of the 23S rRNA in the assembled 50S subunit and ribosome. Its function is as follows. The globular domain of the protein is located near the polypeptide exit tunnel on the outside of the subunit, while an extended beta-hairpin is found that lines the wall of the exit tunnel in the center of the 70S ribosome. This is Large ribosomal subunit protein uL22 from Mycobacterium leprae (strain TN).